The sequence spans 340 residues: Armadillo repeat-containing protein 12 (340 aa).

Residues 1–101 (MGKSIPQYLG…SITRCVYLLE (101 aa)) form an interaction with TBC1D15 region. ARM repeat units lie at residues 100–139 (LEAE…AFSG), 179–218 (LPDY…YLAQ), and 278–318 (SLHE…SLQY).

In terms of assembly, interacts with TBC1D15, TBC1D21, GK2 and IMMT. Interacts with VDAC2 and VDAC3 in a TBC1D21-dependent manner. Interacts (via ARM domains) with RBBP4. In terms of tissue distribution, expressed in testis. Highly expressed in the mid-piece of the elongated and late spermatids. Expressed at higher levels in neuroblastoma tissues and cell lines, than those of normal dorsal ganglia (at protein level). Expressed in breast cancer, colon cancer, hepatocellular carcinoma, lung cancer, pancreas cancer, prostate cancer, renal cancer and gastric cancer, but not in their normal counterparts.

It is found in the nucleus. It localises to the mitochondrion outer membrane. In terms of biological role, essential for male fertility and sperm mitochondrial sheath formation. Required for proper mitochondrial elongation and coiling along the flagellum during the formation of the mitochondrial sheath. Facilitates the growth and aggressiveness of neuroblastoma cells. Increases the EZH2 activity and H3K27me3 levels in a RBBP4-dependent manner, and facilitates the enrichment of polycomb repressive complex 2 and H3K27me3 on gene promoters, resulting in transcriptional repression of tumor suppressors affecting the proliferation, invasion, and metastasis of tumor cells. The polypeptide is Armadillo repeat-containing protein 12 (ARMC12) (Homo sapiens (Human)).